The sequence spans 303 residues: Cyclin-dependent kinase B1-1 (303 aa).

One can recognise a Protein kinase domain in the interval 4–295 (YEKLEKVGEG…AKAAMEHPYF (292 aa)). ATP contacts are provided by residues 10–18 (VGEGTYGKV) and lysine 33. Threonine 14 is subject to Phosphothreonine. Phosphotyrosine is present on tyrosine 15. Aspartate 136 (proton acceptor) is an active-site residue. Phosphothreonine is present on threonine 170.

It belongs to the protein kinase superfamily. CMGC Ser/Thr protein kinase family. CDC2/CDKX subfamily. Expressed in actively dividing cells: root and shoot apical meristems, and young leaves.

It catalyses the reaction L-seryl-[protein] + ATP = O-phospho-L-seryl-[protein] + ADP + H(+). It carries out the reaction L-threonyl-[protein] + ATP = O-phospho-L-threonyl-[protein] + ADP + H(+). The enzyme catalyses [DNA-directed RNA polymerase] + ATP = phospho-[DNA-directed RNA polymerase] + ADP + H(+). The chain is Cyclin-dependent kinase B1-1 (CDKB1-1) from Oryza sativa subsp. japonica (Rice).